A 92-amino-acid polypeptide reads, in one-letter code: C-C motif chemokine 3 (92 aa).

Residues 1 to 23 (MKVSTTALAVLLCTMTLCNQVFS) form the signal peptide. Intrachain disulfides connect Cys-34–Cys-57 and Cys-35–Cys-73.

The protein belongs to the intercrine beta (chemokine CC) family. In terms of assembly, self-associates. Also heterodimer of MIP-1-alpha(4-69) and MIP-1-beta(3-69). Interacts with CCR1. Expressed in lung, spleen, and pancreas.

It localises to the secreted. Functionally, monokine with inflammatory and chemokinetic properties. Binds to CCR1, CCR4 and CCR5. One of the major HIV-suppressive factors produced by CD8+ T-cells. Recombinant MIP-1-alpha induces a dose-dependent inhibition of different strains of HIV-1, HIV-2, and simian immunodeficiency virus (SIV). This is C-C motif chemokine 3 (Ccl3) from Mus musculus (Mouse).